A 308-amino-acid chain; its full sequence is ADP-L-glycero-D-manno-heptose-6-epimerase (308 aa).

NADP(+) contacts are provided by residues 10–11, 31–32, K38, K53, 75–79, and N92; these read FI, DN, and EGACS. Y139 serves as the catalytic Proton acceptor. An NADP(+)-binding site is contributed by K143. Residue N168 coordinates substrate. NADP(+)-binding residues include V169 and K177. The Proton acceptor role is filled by K177. Substrate contacts are provided by residues S179, H186, 200–203, R208, and Y271; that span reads FAGS.

It belongs to the NAD(P)-dependent epimerase/dehydratase family. HldD subfamily. Homopentamer. It depends on NADP(+) as a cofactor.

The catalysed reaction is ADP-D-glycero-beta-D-manno-heptose = ADP-L-glycero-beta-D-manno-heptose. Its pathway is nucleotide-sugar biosynthesis; ADP-L-glycero-beta-D-manno-heptose biosynthesis; ADP-L-glycero-beta-D-manno-heptose from D-glycero-beta-D-manno-heptose 7-phosphate: step 4/4. In terms of biological role, catalyzes the interconversion between ADP-D-glycero-beta-D-manno-heptose and ADP-L-glycero-beta-D-manno-heptose via an epimerization at carbon 6 of the heptose. This Haemophilus influenzae (strain 86-028NP) protein is ADP-L-glycero-D-manno-heptose-6-epimerase.